The chain runs to 1723 residues: Lys-gingipain HG66 (1723 aa).

The first 24 residues, 1-24 (MRKLLLLIAASLLGVGLYAQNAKI), serve as a signal peptide directing secretion. Positions 25-228 (KLDAPTTRTT…ETAYKQLFNR (204 aa)) are excised as a propeptide. Residues Asp313, Asp337, Asp339, Phe341, and Glu343 each contribute to the Ca(2+) site. His444 (proton donor) is an active-site residue. The Nucleophile role is filled by Cys477. Ca(2+) contacts are provided by Phe482 and Glu491. Positions 965 to 985 (DAPNGTPNPNPNPNPGTTTLS) are disordered. 11 residues coordinate Ca(2+): Ser987, Glu989, Asp1000, Asp1002, Asp1004, His1006, Ser1021, Gly1023, Asn1042, Asp1145, and Glu1146.

The protein belongs to the peptidase C25 family. Post-translationally, proteolytically cleaved into a catalytic subunit and three adhesins. Arg-gingipain is involved in this post-translational processing.

Its subcellular location is the secreted. The catalysed reaction is Endopeptidase with strict specificity for lysyl bonds.. Cysteine proteinase with a strong preference for substrates with Lys in the P1 position. Hydrolyzes bovine hemoglobin, bovine serum albumin, casein, human placental type I collagen and human IgA and IgG. Disrupts the functions of polymorphonuclear leukocytes. May act as a virulence factor in the development of peridontal disease. Involved in the coaggregation of P.gingivalis with other oral bacteria. In Porphyromonas gingivalis (Bacteroides gingivalis), this protein is Lys-gingipain HG66.